We begin with the raw amino-acid sequence, 657 residues long: DNA mismatch repair protein MutL (657 aa).

This sequence belongs to the DNA mismatch repair MutL/HexB family.

Functionally, this protein is involved in the repair of mismatches in DNA. It is required for dam-dependent methyl-directed DNA mismatch repair. May act as a 'molecular matchmaker', a protein that promotes the formation of a stable complex between two or more DNA-binding proteins in an ATP-dependent manner without itself being part of a final effector complex. This chain is DNA mismatch repair protein MutL, found in Streptococcus agalactiae serotype III (strain NEM316).